The following is a 155-amino-acid chain: Small ribosomal subunit protein uS7 (155 aa).

This sequence belongs to the universal ribosomal protein uS7 family. Part of the 30S ribosomal subunit. Contacts proteins S9 and S11.

Its function is as follows. One of the primary rRNA binding proteins, it binds directly to 16S rRNA where it nucleates assembly of the head domain of the 30S subunit. Is located at the subunit interface close to the decoding center, probably blocks exit of the E-site tRNA. In Petrotoga mobilis (strain DSM 10674 / SJ95), this protein is Small ribosomal subunit protein uS7.